We begin with the raw amino-acid sequence, 361 residues long: Peptide chain release factor 1 (361 aa).

Q237 bears the N5-methylglutamine mark. Basic and acidic residues predominate over residues 285 to 296 (DEKRRSAEESTR). Positions 285–305 (DEKRRSAEESTRRNLVSSGDR) are disordered.

Belongs to the prokaryotic/mitochondrial release factor family. In terms of processing, methylated by PrmC. Methylation increases the termination efficiency of RF1.

The protein resides in the cytoplasm. Peptide chain release factor 1 directs the termination of translation in response to the peptide chain termination codons UAG and UAA. The polypeptide is Peptide chain release factor 1 (Shewanella halifaxensis (strain HAW-EB4)).